Here is a 354-residue protein sequence, read N- to C-terminus: Hyaluronan and proteoglycan link protein 1 (354 aa).

A propeptide spanning residues 1–9 (MKSLLLLVL) is cleaved from the precursor. 2 N-linked (GlcNAc...) asparagine glycosylation sites follow: Asn-21 and Asn-56. Residues 38–152 (PRLLVEAEQA…EGLEDDTAVV (115 aa)) form the Ig-like V-type domain. Cystine bridges form between Cys-61–Cys-139, Cys-181–Cys-252, Cys-205–Cys-226, Cys-279–Cys-349, and Cys-304–Cys-325. Link domains lie at 159-254 (VVFP…FCFT) and 259-351 (GRFY…YCFR).

This sequence belongs to the HAPLN family.

The protein localises to the secreted. It localises to the extracellular space. The protein resides in the extracellular matrix. In terms of biological role, stabilizes the aggregates of proteoglycan monomers with hyaluronic acid in the extracellular cartilage matrix. The sequence is that of Hyaluronan and proteoglycan link protein 1 (HAPLN1) from Sus scrofa (Pig).